The chain runs to 30 residues: Ribosome-inactivating protein momorcochin-S (30 aa).

This sequence belongs to the ribosome-inactivating protein family. Type 1 RIP subfamily. Glycosylated.

The catalysed reaction is Endohydrolysis of the N-glycosidic bond at one specific adenosine on the 28S rRNA.. Inactivates eukaryotic 60S ribosomal subunits. This is Ribosome-inactivating protein momorcochin-S from Momordica cochinchinensis (Spiny bitter cucumber).